We begin with the raw amino-acid sequence, 840 residues long: Cytosolic carboxypeptidase 2 (840 aa).

The Peptidase M14 domain occupies 358–628 (YPYTYTDLQC…HVCDTLLDFC (271 aa)). Residues His-424, Glu-427, and His-520 each coordinate Zn(2+). Glu-592 functions as the Proton donor/acceptor in the catalytic mechanism. Over residues 706–719 (MFKKKKKKSLQTRK) the composition is skewed to basic residues. Disordered regions lie at residues 706 to 726 (MFKKKKKKSLQTRKQRNEQYQ) and 758 to 789 (ESSSFLPMRNENPRLNETNLNRRDKDTSLDPS).

Belongs to the peptidase M14 family. Interacts with RARRES1, KIF11 and MAPRE1. It depends on Zn(2+) as a cofactor.

It localises to the cytoplasm. It is found in the cytosol. The protein resides in the cytoskeleton. The protein localises to the microtubule organizing center. Its subcellular location is the centrosome. It localises to the centriole. It is found in the cilium basal body. The enzyme catalyses (L-glutamyl)(n+1)-gamma-L-glutamyl-L-glutamyl-[protein] + H2O = (L-glutamyl)(n)-gamma-L-glutamyl-L-glutamyl-[protein] + L-glutamate. Inhibited by RARRES1. Its function is as follows. Metallocarboxypeptidase that mediates deglutamylation of tubulin and non-tubulin target proteins. Catalyzes the removal of polyglutamate side chains present on the gamma-carboxyl group of glutamate residues within the C-terminal tail of tubulin protein. Specifically cleaves tubulin long-side-chains, while it is not able to remove the branching point glutamate. Also catalyzes the removal of polyglutamate residues from the carboxy-terminus of non-tubulin proteins such as MYLK. The chain is Cytosolic carboxypeptidase 2 (AGBL2) from Macaca fascicularis (Crab-eating macaque).